Here is a 358-residue protein sequence, read N- to C-terminus: 3-dehydroquinate synthase (358 aa).

NAD(+)-binding positions include 72–77 (GGERVK), 106–110 (GALLD), 130–131 (ST), lysine 143, and lysine 151. Residues glutamate 184, histidine 245, and histidine 261 each coordinate Zn(2+).

This sequence belongs to the sugar phosphate cyclases superfamily. Dehydroquinate synthase family. Requires NAD(+) as cofactor. It depends on Co(2+) as a cofactor. The cofactor is Zn(2+).

The protein resides in the cytoplasm. The enzyme catalyses 7-phospho-2-dehydro-3-deoxy-D-arabino-heptonate = 3-dehydroquinate + phosphate. It functions in the pathway metabolic intermediate biosynthesis; chorismate biosynthesis; chorismate from D-erythrose 4-phosphate and phosphoenolpyruvate: step 2/7. Its function is as follows. Catalyzes the conversion of 3-deoxy-D-arabino-heptulosonate 7-phosphate (DAHP) to dehydroquinate (DHQ). In Aeropyrum pernix (strain ATCC 700893 / DSM 11879 / JCM 9820 / NBRC 100138 / K1), this protein is 3-dehydroquinate synthase (aroB).